The sequence spans 345 residues: Phosphoribosylformylglycinamidine cyclo-ligase (345 aa).

It belongs to the AIR synthase family.

The protein localises to the cytoplasm. The catalysed reaction is 2-formamido-N(1)-(5-O-phospho-beta-D-ribosyl)acetamidine + ATP = 5-amino-1-(5-phospho-beta-D-ribosyl)imidazole + ADP + phosphate + H(+). It functions in the pathway purine metabolism; IMP biosynthesis via de novo pathway; 5-amino-1-(5-phospho-D-ribosyl)imidazole from N(2)-formyl-N(1)-(5-phospho-D-ribosyl)glycinamide: step 2/2. The protein is Phosphoribosylformylglycinamidine cyclo-ligase of Shewanella denitrificans (strain OS217 / ATCC BAA-1090 / DSM 15013).